A 376-amino-acid chain; its full sequence is Formate dehydrogenase 1 (376 aa).

Residues Val-97 and Asn-121 each contribute to the substrate site. NAD(+) contacts are provided by residues 176–177 (RI), Asp-197, 244–248 (PLHKD), Thr-270, Asp-296, and 325–328 (HISG).

Belongs to the D-isomer specific 2-hydroxyacid dehydrogenase family. FDH subfamily. In terms of assembly, homodimer.

The protein localises to the cytoplasm. It carries out the reaction formate + NAD(+) = CO2 + NADH. In terms of biological role, catalyzes the NAD(+)-dependent oxidation of formate to carbon dioxide. Formate oxidation is the final step in the methanol oxidation pathway in methylotrophic microorganisms. Has a role in the detoxification of exogenous formate in non-methylotrophic organisms. The chain is Formate dehydrogenase 1 (FDH1) from Saccharomyces cerevisiae (strain YJM789) (Baker's yeast).